A 245-amino-acid polypeptide reads, in one-letter code: 5-oxoprolinase subunit A (245 aa).

This sequence belongs to the LamB/PxpA family. In terms of assembly, forms a complex composed of PxpA, PxpB and PxpC.

The catalysed reaction is 5-oxo-L-proline + ATP + 2 H2O = L-glutamate + ADP + phosphate + H(+). In terms of biological role, catalyzes the cleavage of 5-oxoproline to form L-glutamate coupled to the hydrolysis of ATP to ADP and inorganic phosphate. This chain is 5-oxoprolinase subunit A, found in Erwinia tasmaniensis (strain DSM 17950 / CFBP 7177 / CIP 109463 / NCPPB 4357 / Et1/99).